The chain runs to 165 residues: Chorismate pyruvate-lyase (165 aa).

Positions 35, 77, 115, and 156 each coordinate substrate.

Belongs to the UbiC family. As to quaternary structure, monomer.

It localises to the cytoplasm. The enzyme catalyses chorismate = 4-hydroxybenzoate + pyruvate. It functions in the pathway cofactor biosynthesis; ubiquinone biosynthesis. Its function is as follows. Removes the pyruvyl group from chorismate, with concomitant aromatization of the ring, to provide 4-hydroxybenzoate (4HB) for the ubiquinone pathway. This Salmonella schwarzengrund (strain CVM19633) protein is Chorismate pyruvate-lyase.